Reading from the N-terminus, the 185-residue chain is Pyruvate/ketoisovalerate oxidoreductases common subunit gamma (185 aa).

In terms of assembly, heterotetramer of one alpha, one beta, one delta and one gamma chain.

The enzyme catalyses 2 oxidized [2Fe-2S]-[ferredoxin] + pyruvate + CoA = 2 reduced [2Fe-2S]-[ferredoxin] + acetyl-CoA + CO2 + H(+). It carries out the reaction 3-methyl-2-oxobutanoate + 2 oxidized [2Fe-2S]-[ferredoxin] + CoA = 2-methylpropanoyl-CoA + 2 reduced [2Fe-2S]-[ferredoxin] + CO2 + H(+). This chain is Pyruvate/ketoisovalerate oxidoreductases common subunit gamma (porG), found in Pyrococcus abyssi (strain GE5 / Orsay).